The following is a 368-amino-acid chain: MSVAGLKKQFYKASQLVSEKVGGAEGTKLDDDFKEMEKKVDVTSKAVTEVLARTIEYLQPNPASRAKLTMLNTVSKIRGQVKNPGYPQSEGLLGECMIRHGKELGGESNFGDALLDAGESMKRLAEVKDSLDIEVKQNFIDPLQNLCEKDLKEIQHHLKKLEGRRLDFDYKKKRQGKIPDEELRQALEKFEESKEVAETSMHNLLETDIEQVSQLSALVDAQLDYHRQAVQILDELAEKLKRRMREASSRPKREYKPKPREPFDLGEPEQSNGGFPCTTAPKIAASSSFRSSDKPIRTPSRSMPPLDQPSCKALYDFEPENDGELGFHEGDVITLTNQIDENWYEGMLDGQSGFFPLSYVEVLVPLPQ.

A membrane-binding amphipathic helix region spans residues 1-21; sequence MSVAGLKKQFYKASQLVSEKV. The BAR domain maps to 18-249; sequence SEKVGGAEGT…LKRRMREASS (232 aa). Positions 60 to 87 are required for dimerization upon membrane association; that stretch reads PNPASRAKLTMLNTVSKIRGQVKNPGYP. Positions 145-250 form a coiled coil; sequence NLCEKDLKEI…KRRMREASSR (106 aa). Residues 218 to 254 form an interaction with ARC region; the sequence is LVDAQLDYHRQAVQILDELAEKLKRRMREASSRPKRE. The interval 244-308 is disordered; that stretch reads MREASSRPKR…PSRSMPPLDQ (65 aa). The segment covering 245–263 has biased composition (basic and acidic residues); it reads REASSRPKREYKPKPREPF. 2 positions are modified to phosphoserine: S288 and S292. Residue T298 is modified to Phosphothreonine. An SH3 domain is found at 306–365; sequence LDQPSCKALYDFEPENDGELGFHEGDVITLTNQIDENWYEGMLDGQSGFFPLSYVEVLVP. Y315 is subject to Phosphotyrosine.

This sequence belongs to the endophilin family. In terms of assembly, interacts with ARC. Interacts with SYNJ1 and DNM1. Interacts with PDCD6IP. Interacts with BIN2. In terms of tissue distribution, ubiquitous. Higher expression in pancreas, placenta, prostate, testis and uterus.

Its subcellular location is the cytoplasm. It is found in the early endosome membrane. The protein localises to the cell projection. It localises to the podosome. Implicated in endocytosis. May recruit other proteins to membranes with high curvature. The protein is Endophilin-A2 (SH3GL1) of Homo sapiens (Human).